We begin with the raw amino-acid sequence, 93 residues long: Hematopoietic cell signal transducer (93 aa).

A signal peptide spans 1–18; that stretch reads MIHLGHILFLLLLPVAAA. Residues 19-48 lie on the Extracellular side of the membrane; the sequence is QTTPGERSSLPAFYPGTSGSCSGCGSLSLP. The helical transmembrane segment at 49–69 threads the bilayer; the sequence is LLAGLVAADAVASLLIVGAVF. Topologically, residues 70 to 93 are cytoplasmic; it reads LCARPRRSPAQEDGKVYINMPGRG. Position 86 is a phosphotyrosine (Tyr86). Residues 86–88 are GRB2 binding site; that stretch reads YIN. The interval 86 to 89 is PIK3R1 binding site; that stretch reads YINM.

It belongs to the DAP10 family. Interacts with CLEC5A. Forms an CLEC5A/TYROBP/HCST trimolecular complex depending almost solely on TYROBP. Homodimer; Disulfide-linked. Heterohexamer composed of four subunits of HCST/DAP10 and two subunits of KLRK1. Interacts (via transmembrane domain) with KLRK1 (via transmembrane domain); the interaction is required for KLRK1 NK cell surface and induces NK cell-mediated cytotoxicity. Interacts with PIK3R1 and GRB2. Interacts with CD300H. Post-translationally, phosphorylated; PIK3R1 and GRB2 associate specifically with tyrosine-phosphorylated HCST. In terms of processing, O-glycosylated. Predominantly expressed in hemopoietic cells such as NK cells, subset of T-cells and monocytes. Detected in leukocytes, spleen, and thymus.

Its subcellular location is the membrane. Its function is as follows. Transmembrane adapter protein which associates with KLRK1 to form an activation receptor KLRK1-HCST in lymphoid and myeloid cells; this receptor plays a major role in triggering cytotoxicity against target cells expressing cell surface ligands such as MHC class I chain-related MICA and MICB, and UL16-binding proteins (ULBPs); these ligands are up-regulated by stress conditions and pathological state such as viral infection and tumor transformation. Functions as a docking site for PI3-kinase PIK3R1 and GRB2. Interaction of ULBPs with KLRK1-HCST triggers calcium mobilization and activation of the PIK3R1, MAP2K/ERK, and JAK2/STAT5 signaling pathways. Both PIK3R1 and GRB2 are required for full KLRK1-HCST-mediated activation and ultimate killing of target cells. In NK cells, KLRK1-HCST signaling directly induces cytotoxicity and enhances cytokine production initiated via DAP12/TYROBP-associated receptors. In T-cells, it provides primarily costimulation for TCR-induced signals. KLRK1-HCST receptor plays a role in immune surveillance against tumors and is required for cytolysis of tumors cells; indeed, melanoma cells that do not express KLRK1 ligands escape from immune surveillance mediated by NK cells. The sequence is that of Hematopoietic cell signal transducer (HCST) from Homo sapiens (Human).